The primary structure comprises 2168 residues: MGMQMSKNTAGSHTTVTQASGGSHINYTNINYYSHSASASQNKQDITQDPSKFTQPMVDIMKESAVPLKSPSAEACGYSDRVAQLTLGNSTITTQEAANITVAYGEWPSYLSDLDATAVDKTTKPGVSCDRFYTLPGKKWEATTKGWEWKLPDALTELGVFGQNCQFHFLYRCGWSIHVQCNATKFHQGTLLVVAVPDHQLGTTYQPEFDNVMPGKAGREVKYPYNFEDGTSLANSLIYPHQWINLRTNNSATLVLPYANAIPMDSPIRHSSWSLLVIPVVPLACATGTTPFVGITITLAPMFSEFSGLRRAIAQGIPTTNTPGSYQFLTTDEDSSACILPDFTPTQEIHIPGEVKNLQALCQVESLLEINNVDGKTGIERLRLEVSTQSELDRQLFALKVSFTEGEIMSKTLCGVMCSYYTQWSGSLEITFMFTGSFMTTGKLLLAYTPPGGSAPASREDAMLGTHVIWDFGLQSSITLVVPWICGGYYRDVNRANNYYAAGYVTGWFQTNMVIPPDFPSTAYILCFLAAQPNFSLRILKDRPDITQTAALQAPVETALNSAISSVIAGITAQDTQPSSHNISTSETPALQAAETGASSNASDEGMMETRHVVNTNTVSETSIESFYGRCGLVSIKEIADNKQVEKWLVNFNEFVQLRAKIELFTYMRFDIEFTLVATFTKGNSASQHPVQVQVMYLPPEQLLQLQQDSYAWQSAANPSAIFSANTVPARFSVPFVGTANAYTIMYDGYNVFGSNRPSADYGMINSSHMGSMAFRAISQLQATEKVKFMDLCQVKDVRAWCPRAPRMAPYKYIRNPVFETQDRIVPNRNNITTTGAFGQQSGAIYVGNYKIMNRHLATHEDWENVEWEDYNRDILVARTTAHGADKLARCHCNTGVYYCKSRNKHYPVTSRVQASIGSRLVSTTQLDTRPICSLPSGISEPGDCGGILRCQHGVIGIVTAGGQGVVGFADVRDLFWVEHEAMEQGLTDYIQQLGNSFGQGFTAEITNYASQLSEMLIGADGMVERCLQTFVKVISAVVIATRSQGDVPTILATLALIGCDGSPWRWLKRQFCGIFKIPYVEKQGDDWLKKFTSYVNAFKGLDWVAEKIMKFIDWMKNKLIPQARERQEFTTNLKTLPLLEAQVATLEHSCPTTEQQETIFGNIQYLAHHCRRYAPLYAAEARRVYALEKRILGYIQFKSKQRIEPVCLLIHGTAGTGKSLATSIIGRKLAEYEHSEVYAIPPDSDHFDGYQQQAVVVMDDLNQNPDGKDMVAFCQMVSTVPYHVPMAAIEEKGMLFTSSYVLASTNSGSIHPPTVSNSKALSRRFAFDVDIEVSEHYKTHNGTLDVVNATQRCEDCCPANFKTCMPLICGEAYQLVDRRNGMRYSIDTMISAMRAEWKRRNQVGLCYVRLFQGPPQFKPLKISVDPEIPAPPAIADLLASVDSEEVREYCKKKGWIVEVPVTATTLERNVSIATTILSSLVLLTSVITLVYLVYRLFAGYQGPYTGLPNAKPKPPVLREVRAQGPLMDFGVGMMKKNIVTVRTGAGEFTGLGVHDHVLVLPKHSHPAEIVVVDGKETPVEDAYNLTDEQGVSLELTLVTLKRNEKFRDIRAMIPENPCGTNEAVVCVNTSNFPNAFLPVGKVEYYGYLNLAGSPTHRTMMYNFPTKAGQCGGVVLSTGKVLGIHIGGNGAQGFCAALKRSYFTKPQGKIDWVEPSKKHGFPVINAPSKTKLEPSVFFDVFEGVKEPAALHPKDPRLEVNLEEALFSKYTGNVDIEMPEEMKEAVDHYANQLLALDIPTEPLSMEEAIYGTEGLEALDLTTSAGYPYVTMGIKKRDILNKETRDVKKMQECIDKYGLNLPMVTYIKDELRSKEKVKKGKSRLIEASSLNDSVAMRCYFGNLYKAFHQNPGTLTGCAVGCDPDTFWSKIPVMMDGELFGFDYTAYDASLSPLMFQALQMVLEKIGFGEGKHFIDNLCYSHHLFRDKYYFVKGGMPSGCSGTSIFNSMINNIIIRTVVLQTYKGIELDQLKIIAYGDDVIASYPYRIDPAELAKAGAKLGLHMTPPDKSETYVDLDWTNVTFLKRNFVPDEKYPFLVHPVMPMKEIYESIRWTRDARNTQDHVRSLCLLAWHNGRKEYEEFCRKIRSVPVGRALHLPSYSSLLREWYEKF.

Residues 1–20 are disordered; sequence MGMQMSKNTAGSHTTVTQAS. G2 carries the N-myristoyl glycine; by host lipid modification. Residues 2-1479 lie on the Cytoplasmic side of the membrane; the sequence is GMQMSKNTAG…NVSIATTILS (1478 aa). Amphipathic alpha-helix stretches follow at residues 551-567 and 554-575; these read ALQA…ISSV and APVE…TAQD. Residues 576 to 589 are compositionally biased toward polar residues; the sequence is TQPSSHNISTSETP. The tract at residues 576 to 607 is disordered; sequence TQPSSHNISTSETPALQAAETGASSNASDEGM. Catalysis depends on for protease 2A activity residues H856 and D874. C891 and C893 together coordinate Zn(2+). Catalysis depends on C945, which acts as the For protease 2A activity. Zn(2+)-binding residues include C951 and H953. The membrane-binding stretch occupies residues 1085-1157; that stretch reads GDDWLKKFTS…EHSCPTTEQQ (73 aa). The tract at residues 1085 to 1223 is oligomerization; sequence GDDWLKKFTS…TAGTGKSLAT (139 aa). The segment at 1106–1110 is RNA-binding; that stretch reads AEKIM. One can recognise an SF3 helicase domain in the interval 1189–1347; sequence EKRILGYIQF…YKTHNGTLDV (159 aa). Zn(2+)-binding residues include C1354, C1365, and C1370. The C4-type; degenerate zinc finger occupies 1354 to 1370; sequence CEDCCPANFKTCMPLIC. An RNA-binding region spans residues 1397 to 1404; that stretch reads EWKRRNQV. The interval 1408–1413 is oligomerization; it reads YVRLFQ. An intramembrane segment occupies 1480–1495; it reads SLVLLTSVITLVYLVY. Residues 1496-2168 lie on the Cytoplasmic side of the membrane; sequence RLFAGYQGPY…SLLREWYEKF (673 aa). Position 1505 is an O-(5'-phospho-RNA)-tyrosine (Y1505). The Peptidase C3 domain occupies 1525–1703; sequence GPLMDFGVGM…FCAALKRSYF (179 aa). Catalysis depends on for protease 3C activity residues H1564, E1595, and C1671. Residues 1934 to 2048 enclose the RdRp catalytic domain; that stretch reads GELFGFDYTA…ASYPYRIDPA (115 aa). 2 residues coordinate Mg(2+): D1940 and D2035.

Belongs to the picornaviruses polyprotein family. As to quaternary structure, interacts with capsid protein VP1 and capsid protein VP3 to form heterotrimeric protomers. Interacts with capsid protein VP0, and capsid protein VP3 to form heterotrimeric protomers. Five protomers subsequently associate to form pentamers which serve as building blocks for the capsid. Interacts with capsid protein VP2, capsid protein VP3 and capsid protein VP4 following cleavage of capsid protein VP0. In terms of assembly, interacts with capsid protein VP1 and capsid protein VP3 in the mature capsid. As to quaternary structure, interacts with capsid protein VP0 and capsid protein VP1 to form heterotrimeric protomers. Five protomers subsequently associate to form pentamers which serve as building blocks for the capsid. Interacts with capsid protein VP4 in the mature capsid. Interacts with protein 2C; this interaction may be important for virion morphogenesis. Interacts with capsid protein VP1 and capsid protein VP3. In terms of assembly, homodimer. As to quaternary structure, homohexamer; forms a hexameric ring structure with 6-fold symmetry characteristic of AAA+ ATPases. Interacts (via N-terminus) with host RTN3 (via reticulon domain); this interaction is important for viral replication. Interacts with capsid protein VP3; this interaction may be important for virion morphogenesis. Interacts with protein 3CD. In terms of assembly, homodimer. Interacts with host GBF1. Interacts (via GOLD domain) with host ACBD3 (via GOLD domain); this interaction allows the formation of a viral protein 3A/ACBD3 heterotetramer with a 2:2 stoichiometry, which will stimulate the recruitment of host PI4KB in order to synthesize PI4P at the viral RNA replication sites. As to quaternary structure, interacts with RNA-directed RNA polymerase. Interacts with protein 3AB and with RNA-directed RNA polymerase. In terms of assembly, interacts with Viral protein genome-linked and with protein 3CD. The cofactor is Mg(2+). In terms of processing, specific enzymatic cleavages in vivo by the viral proteases yield processing intermediates and the mature proteins. Post-translationally, myristoylation is required for the formation of pentamers during virus assembly. Further assembly of 12 pentamers and a molecule of genomic RNA generates the provirion. During virion maturation, immature virions are rendered infectious following cleavage of VP0 into VP4 and VP2. This maturation seems to be an autocatalytic event triggered by the presence of RNA in the capsid and it is followed by a conformational change infectious virion. In terms of processing, myristoylation is required during RNA encapsidation and formation of the mature virus particle. Post-translationally, VPg is uridylylated by the polymerase into VPg-pUpU. This acts as a nucleotide-peptide primer for the genomic RNA replication.

The protein localises to the virion. The protein resides in the host cytoplasm. Its subcellular location is the host cytoplasmic vesicle membrane. It is found in the host nucleus. The catalysed reaction is a ribonucleoside 5'-triphosphate + H2O = a ribonucleoside 5'-diphosphate + phosphate + H(+). It carries out the reaction Selective cleavage of Tyr-|-Gly bond in the picornavirus polyprotein.. The enzyme catalyses RNA(n) + a ribonucleoside 5'-triphosphate = RNA(n+1) + diphosphate. It catalyses the reaction Selective cleavage of Gln-|-Gly bond in the poliovirus polyprotein. In other picornavirus reactions Glu may be substituted for Gln, and Ser or Thr for Gly.. Replication or transcription is subject to high level of random mutations by the nucleotide analog ribavirin. Forms an icosahedral capsid of pseudo T=3 symmetry with capsid proteins VP2 and VP3. The capsid is 300 Angstroms in diameter, composed of 60 copies of each capsid protein and enclosing the viral positive strand RNA genome. Capsid protein VP1 mainly forms the vertices of the capsid. Capsid protein VP1 interacts with host cell receptor to provide virion attachment to target host cells. This attachment induces virion internalization. Tyrosine kinases are probably involved in the entry process. After binding to its receptor, the capsid undergoes conformational changes. Capsid protein VP1 N-terminus (that contains an amphipathic alpha-helix) and capsid protein VP4 are externalized. Together, they shape a pore in the host membrane through which viral genome is translocated to host cell cytoplasm. In terms of biological role, forms an icosahedral capsid of pseudo T=3 symmetry with capsid proteins VP2 and VP3. The capsid is 300 Angstroms in diameter, composed of 60 copies of each capsid protein and enclosing the viral positive strand RNA genome. Its function is as follows. Lies on the inner surface of the capsid shell. After binding to the host receptor, the capsid undergoes conformational changes. Capsid protein VP4 is released, Capsid protein VP1 N-terminus is externalized, and together, they shape a pore in the host membrane through which the viral genome is translocated into the host cell cytoplasm. Functionally, component of immature procapsids, which is cleaved into capsid proteins VP4 and VP2 after maturation. Allows the capsid to remain inactive before the maturation step. Cysteine protease that cleaves viral polyprotein and specific host proteins. It is responsible for the autocatalytic cleavage between the P1 and P2 regions, which is the first cleavage occurring in the polyprotein. Also cleaves the host translation initiation factor EIF4G1, in order to shut down the capped cellular mRNA translation. Inhibits the host nucleus-cytoplasm protein and RNA trafficking by cleaving host members of the nuclear pores. Counteracts stress granule formation probably by antagonizing its assembly or promoting its dissassembly. In terms of biological role, plays an essential role in the virus replication cycle by acting as a viroporin. Creates a pore in the host endoplasmic reticulum and as a consequence releases Ca2+ in the cytoplasm of infected cell. In turn, high levels of cytoplasmic calcium may trigger membrane trafficking and transport of viral ER-associated proteins to viroplasms, sites of viral genome replication. Its function is as follows. Induces and associates with structural rearrangements of intracellular membranes. Displays RNA-binding, nucleotide binding and NTPase activities. May play a role in virion morphogenesis and viral RNA encapsidation by interacting with the capsid protein VP3. Functionally, localizes the viral replication complex to the surface of membranous vesicles. Together with protein 3CD binds the Cis-Active RNA Element (CRE) which is involved in RNA synthesis initiation. Acts as a cofactor to stimulate the activity of 3D polymerase, maybe through a nucleid acid chaperone activity. Localizes the viral replication complex to the surface of membranous vesicles. It inhibits host cell endoplasmic reticulum-to-Golgi apparatus transport and causes the disassembly of the Golgi complex, possibly through GBF1 interaction. This would result in depletion of MHC, trail receptors and IFN receptors at the host cell surface. Plays an essential role in viral RNA replication by recruiting ACBD3 and PI4KB at the viral replication sites, thereby allowing the formation of the rearranged membranous structures where viral replication takes place. In terms of biological role, acts as a primer for viral RNA replication and remains covalently bound to viral genomic RNA. VPg is uridylylated prior to priming replication into VPg-pUpU. The oriI viral genomic sequence may act as a template for this. The VPg-pUpU is then used as primer on the genomic RNA poly(A) by the RNA-dependent RNA polymerase to replicate the viral genome. During genome replication, the VPg-RNA linkage is removed by the host TDP2, thereby accelerating replication. During the late stage of the replication cycle, host TDP2 is excluded from sites of viral RNA synthesis and encapsidation, allowing for the generation of progeny virions. Its function is as follows. Involved in the viral replication complex and viral polypeptide maturation. It exhibits protease activity with a specificity and catalytic efficiency that is different from protease 3C. Protein 3CD lacks polymerase activity. Protein 3CD binds to the 5'UTR of the viral genome. Functionally, replicates the viral genomic RNA on the surface of intracellular membranes. May form linear arrays of subunits that propagate along a strong head-to-tail interaction called interface-I. Covalently attaches UMP to a tyrosine of VPg, which is used to prime RNA synthesis. The positive stranded RNA genome is first replicated at virus induced membranous vesicles, creating a dsRNA genomic replication form. This dsRNA is then used as template to synthesize positive stranded RNA genomes. ss(+)RNA genomes are either translated, replicated or encapsidated. Major viral protease that mediates proteolytic processing of the polyprotein. Cleaves host EIF5B, contributing to host translation shutoff. Also cleaves host PABPC1, contributing to host translation shutoff. Cleaves host NLRP1, triggers host N-glycine-mediated degradation of the autoinhibitory NLRP1 N-terminal fragment. This Sus scrofa (Pig) protein is Genome polyprotein.